The sequence spans 589 residues: Transmembrane 9 superfamily member 3 (589 aa).

The signal sequence occupies residues 1–28 (MRPLPGALGVAAAAALWLLLLLLPRTRA). A glycan (N-linked (GlcNAc...) asparagine) is linked at N174. 5 consecutive transmembrane segments (helical) span residues 224-244 (FSIF…SMIL), 294-314 (LIGS…VAMI), 328-348 (AIFV…SLYA), 360-380 (FIGA…INFI), and 389-409 (AIPF…ILPL). N419 carries an N-linked (GlcNAc...) asparagine glycan. The next 4 helical transmembrane spans lie at 449–469 (IVCL…YFIF), 482–502 (GFMM…TIVC), 519–539 (FLSA…YYFF), and 551–571 (FYFG…GAIG).

The protein belongs to the nonaspanin (TM9SF) (TC 9.A.2) family.

The protein localises to the membrane. This chain is Transmembrane 9 superfamily member 3 (TM9SF3), found in Homo sapiens (Human).